The sequence spans 88 residues: Small ribosomal subunit protein bS20 (88 aa).

The segment at 1–20 is disordered; sequence MANHKSAEKRARQTIKRTER.

The protein belongs to the bacterial ribosomal protein bS20 family.

Binds directly to 16S ribosomal RNA. The polypeptide is Small ribosomal subunit protein bS20 (Campylobacter fetus subsp. fetus (strain 82-40)).